The following is a 410-amino-acid chain: Sporulation killing factor maturation protein SkfB (410 aa).

In terms of domain architecture, Radical SAM core spans 103–314; the sequence is SYLPISCTLQ…LREARHKWGD (212 aa). 6 residues coordinate [4Fe-4S] cluster: Cys117, Cys121, Cys124, Cys380, Cys385, and Cys387.

This sequence belongs to the radical SAM superfamily. Requires [4Fe-4S] cluster as cofactor.

It localises to the cytoplasm. Catalyzes the formation of the thioether bond required for production of the sporulation killing factor (SKF) from SkfA. Forms the cysteine-methionine thioether bond found in SKF; the acceptor amino acid can be hydrophobic, aromatic or a small hydrophilic amino acid but not a larger hydrophilic amino acid, i.e. Met=Ala, Phe, Leu, Tyr&gt;Asn, Ser&gt;&gt;Gln, Glu, Lys. The relative position of Cys and Met in the substrate cannot be inverted, in vitro the thioether bond cannot be made in the absence of the SkfA propeptide, suggesting this is the first reaction in SKF maturation. In vitro, in the absence of a second substrate, cleaves S-adenosyl-L-methionine into Met and 5'-dA. In Bacillus subtilis (strain 168), this protein is Sporulation killing factor maturation protein SkfB.